The chain runs to 1148 residues: Putative ATP-dependent RNA helicase rha-2 (1148 aa).

The segment covering 1 to 10 (MGKRKTKEDN) has biased composition (basic and acidic residues). Disordered regions lie at residues 1–51 (MGKR…FAKE) and 101–163 (STKL…DAGN). A compositionally biased stretch (acidic residues) spans 138 to 160 (PTDDESSSEEEEEEEEGDNDIED). Residues 246-412 (VEAINENLVT…KLFPLLTPKV (167 aa)) form the Helicase ATP-binding domain. 259–266 (GETGSGKT) contributes to the ATP binding site. Positions 355–358 (DEAH) match the DEAH box motif. Positions 463 to 703 (EVKQLITKLK…QLVLHLKSMN (241 aa)) constitute a Helicase C-terminal domain.

The protein belongs to the DEAD box helicase family. DEAH subfamily.

The enzyme catalyses ATP + H2O = ADP + phosphate + H(+). In terms of biological role, probable ATP-binding RNA helicase. This Caenorhabditis elegans protein is Putative ATP-dependent RNA helicase rha-2 (rha-2).